We begin with the raw amino-acid sequence, 184 residues long: UPF0149 protein Avin_47340 (184 aa).

It belongs to the UPF0149 family.

This is UPF0149 protein Avin_47340 from Azotobacter vinelandii (strain DJ / ATCC BAA-1303).